Consider the following 364-residue polypeptide: CLIP domain-containing serine protease B15 (364 aa).

The signal sequence occupies residues 1–19; the sequence is MRWLVCLIVSWCSLVPLGA. The 60-residue stretch at 30 to 89 folds into the Clip domain; the sequence is PCQTPSGTAGTCEPVKNCSYVRKILKSPDFSHYDTTYLDTLKCGDLMVPMRKKPIPLLCC. 3 cysteine pairs are disulfide-bonded: C31/C88, C41/C72, and C47/C89. N46 carries an N-linked (GlcNAc...) asparagine glycan. The 253-residue stretch at 107 to 359 folds into the Peptidase S1 domain; it reads IYFGEETERG…YLDWMETVMF (253 aa). N-linked (GlcNAc...) asparagine glycosylation is present at N131. C137 and C153 are disulfide-bonded. The active-site Charge relay system is the H152. N-linked (GlcNAc...) asparagine glycans are attached at residues N171, N177, and N206. The active-site Charge relay system is the D212. A disulfide bond links C279 and C296. N287 and N301 each carry an N-linked (GlcNAc...) asparagine glycan. The cysteines at positions 306 and 335 are disulfide-linked. S310 acts as the Charge relay system in catalysis.

It belongs to the peptidase S1 family. CLIP subfamily. In terms of processing, N-glycosylated. Post-translationally, proteolytically cleaved. In terms of tissue distribution, expressed by a subpopulation of hemocytes.

It localises to the secreted. In terms of biological role, serine protease. Plays a role in innate immunity against infections by parasite P.berghei and by Gram-negative bacteria such as E.coli. In response to P.berghei infection, contributes to the clearing of parasite ookinetes independent of melanization, an innate immune response which consists in the deposition of melanin pigments on invading pathogens and parasites. The protein is CLIP domain-containing serine protease B15 of Anopheles gambiae (African malaria mosquito).